The primary structure comprises 130 residues: Small ribosomal subunit protein uS8 (130 aa).

Belongs to the universal ribosomal protein uS8 family. As to quaternary structure, part of the 30S ribosomal subunit.

Functionally, one of the primary rRNA binding proteins, it binds directly to 16S rRNA central domain where it helps coordinate assembly of the platform of the 30S subunit. The sequence is that of Small ribosomal subunit protein uS8 from Haloquadratum walsbyi (strain DSM 16790 / HBSQ001).